A 330-amino-acid polypeptide reads, in one-letter code: Anthranilate phosphoribosyltransferase (330 aa).

Residues Gly-75, 78 to 79 (GD), Thr-83, 85 to 88 (NVST), 103 to 111 (KHGNRAASS), and Ala-115 each bind 5-phospho-alpha-D-ribose 1-diphosphate. Gly-75 is an anthranilate binding site. Ser-87 is a Mg(2+) binding site. Asn-106 contacts anthranilate. Arg-161 is an anthranilate binding site. Mg(2+)-binding residues include Asp-220 and Glu-221.

It belongs to the anthranilate phosphoribosyltransferase family. Homodimer. The cofactor is Mg(2+).

It carries out the reaction N-(5-phospho-beta-D-ribosyl)anthranilate + diphosphate = 5-phospho-alpha-D-ribose 1-diphosphate + anthranilate. It participates in amino-acid biosynthesis; L-tryptophan biosynthesis; L-tryptophan from chorismate: step 2/5. Functionally, catalyzes the transfer of the phosphoribosyl group of 5-phosphorylribose-1-pyrophosphate (PRPP) to anthranilate to yield N-(5'-phosphoribosyl)-anthranilate (PRA). The protein is Anthranilate phosphoribosyltransferase of Erythrobacter litoralis (strain HTCC2594).